Here is a 137-residue protein sequence, read N- to C-terminus: Basic phospholipase A2 2 (137 aa).

Positions 1-11 (LVAVCVSLLGA) are cleaved as a signal peptide. A propeptide spanning residues 12–19 (ANIPPQPL) is cleaved from the precursor. Disulfide bonds link cysteine 30–cysteine 89, cysteine 44–cysteine 136, cysteine 46–cysteine 62, cysteine 61–cysteine 117, cysteine 68–cysteine 110, cysteine 78–cysteine 103, and cysteine 96–cysteine 108. Tyrosine 45 and glycine 47 together coordinate Ca(2+). Tyrosine 48 contributes to the alpha-D-mannopyranose binding site. Glycine 49 provides a ligand contact to Ca(2+). Histidine 65 is an active-site residue. Aspartate 66 contributes to the Ca(2+) binding site. Residue aspartate 66 participates in alpha-D-mannopyranose binding. Aspartate 111 is an active-site residue.

Belongs to the phospholipase A2 family. Group I subfamily. D49 sub-subfamily. Homodimer; non-covalently linked. Ca(2+) is required as a cofactor. Post-translationally, homodimerization and interaction of the catalytically important Asp-49 (here Asp-111) with mannose molecules may render this protein inactive. As to expression, expressed by the venom gland.

It is found in the secreted. It carries out the reaction a 1,2-diacyl-sn-glycero-3-phosphocholine + H2O = a 1-acyl-sn-glycero-3-phosphocholine + a fatty acid + H(+). Snake venom phospholipase A2 (PLA2) that shows anticoagulant and neurotoxic activities. Functionally, PLA2 catalyzes the calcium-dependent hydrolysis of the 2-acyl groups in 3-sn-phosphoglycerides. In Bungarus caeruleus (Indian krait), this protein is Basic phospholipase A2 2.